Consider the following 492-residue polypeptide: Catalase isozyme 1 (492 aa).

Active-site residues include His-65 and Asn-138. Tyr-348 lines the heme pocket.

It belongs to the catalase family. Homotetramer. Heme serves as cofactor.

The protein localises to the peroxisome. It localises to the glyoxysome. The enzyme catalyses 2 H2O2 = O2 + 2 H2O. Functionally, occurs in almost all aerobically respiring organisms and serves to protect cells from the toxic effects of hydrogen peroxide. This Solanum tuberosum (Potato) protein is Catalase isozyme 1 (CAT1).